The primary structure comprises 220 residues: Cytidylate kinase (220 aa).

10–18 (GPASSGKST) contacts ATP.

It belongs to the cytidylate kinase family. Type 1 subfamily.

It is found in the cytoplasm. The enzyme catalyses CMP + ATP = CDP + ADP. It carries out the reaction dCMP + ATP = dCDP + ADP. This is Cytidylate kinase from Lactococcus lactis subsp. cremoris (strain MG1363).